Consider the following 164-residue polypeptide: Interleukin-36 beta (164 aa).

The propeptide occupies 1 to 4; it reads MNPQ.

It belongs to the IL-1 family. Interacts with cargo receptor TMED10; the interaction mediates the translocation from the cytoplasm into the ERGIC (endoplasmic reticulum-Golgi intermediate compartment) and thereby secretion. Post-translationally, N-terminal truncation leads to a dramatic enhancement of its activity (&gt;1000-fold). Expression at low levels in tonsil, bone marrow, heart, placenta, lung, testis and colon but not in any hematopoietic cell lines. Not detected in adipose tissue. Expressed at higher levels in psoriatic plaques than in symptomless psoriatic skin or healthy control skin. Increased levels are not detected in inflamed joint tissue.

It is found in the cytoplasm. The protein localises to the secreted. Functionally, cytokine that binds to and signals through the IL1RL2/IL-36R receptor which in turn activates NF-kappa-B and MAPK signaling pathways in target cells linked to a pro-inflammatory response. Part of the IL-36 signaling system that is thought to be present in epithelial barriers and to take part in local inflammatory response; similar to the IL-1 system with which it shares the coreceptor IL1RAP. Stimulates production of interleukin-6 and interleukin-8 in synovial fibrobasts, articular chondrocytes and mature adipocytes. Induces expression of a number of antimicrobial peptides including beta-defensins 4 and 103 as well as a number of matrix metalloproteases. Seems to be involved in skin inflammatory response by acting on keratinocytes, dendritic cells and indirectly on T-cells to drive tissue infiltration, cell maturation and cell proliferation. In cultured keratinocytes induces the expression of macrophage, T-cell, and neutrophil chemokines, such as CCL3, CCL4, CCL5, CCL2, CCL17, CCL22, CL20, CCL5, CCL2, CCL17, CCL22, CXCL8, CCL20 and CXCL1, and the production of pro-inflammatory cytokines such as TNF-alpha, IL-8 and IL-6. The chain is Interleukin-36 beta from Homo sapiens (Human).